We begin with the raw amino-acid sequence, 384 residues long: H-2 class I histocompatibility antigen, TLA(B) alpha chain (384 aa).

A signal peptide spans 1-26 (MRMGTPVPGTLLILLAASQGQTQTCP). Residues 27–116 (GSHSLRYFYT…MLDYYNLSQN (90 aa)) are alpha-1. Over 27-314 (GSHSLRYFYT…TSMPNRTTVR (288 aa)) the chain is Extracellular. 3 N-linked (GlcNAc...) asparagine glycosylation sites follow: N63, N112, and N116. The segment at 117-208 (GSHTIQVMYG…ENRKKTQECT (92 aa)) is alpha-2. 2 disulfides stabilise this stretch: C127–C190 and C229–C285. Residues 209 to 300 (DPPKTHVTHH…GLPEPLTLRW (92 aa)) are alpha-3. Residues 211 to 299 (PKTHVTHHPR…EGLPEPLTLR (89 aa)) enclose the Ig-like C1-type domain. Positions 301-314 (EPPQTSMPNRTTVR) are connecting peptide. N309 carries N-linked (GlcNAc...) asparagine glycosylation. Residues 315–334 (ALLGAMIILGFMSGSVMMWM) traverse the membrane as a helical segment. The Cytoplasmic portion of the chain corresponds to 335 to 384 (RKNNGGNGDDNTAAYQNEREHLSLDPRAESEALGVEAGMKDLPSAPPLVS). Residues 354-364 (EHLSLDPRAES) show a composition bias toward basic and acidic residues. Residues 354 to 384 (EHLSLDPRAESEALGVEAGMKDLPSAPPLVS) form a disordered region.

The protein belongs to the MHC class I family. Heterodimer of an alpha chain and a beta chain (beta-2-microglobulin). In terms of tissue distribution, TL antigens are only expressed on thymocytes, activated T-lymphocytes and on some thymic leukemias.

It is found in the membrane. Functionally, involved in the presentation of foreign antigens to the immune system. The protein is H-2 class I histocompatibility antigen, TLA(B) alpha chain (H2-T3) of Mus musculus (Mouse).